A 145-amino-acid chain; its full sequence is Large ribosomal subunit protein uL13 (145 aa).

This sequence belongs to the universal ribosomal protein uL13 family. Part of the 50S ribosomal subunit. Binds to Obg (AC P20964).

Functionally, this protein is one of the early assembly proteins of the 50S ribosomal subunit, although it is not seen to bind rRNA by itself. It is important during the early stages of 50S assembly. This chain is Large ribosomal subunit protein uL13, found in Bacillus subtilis (strain 168).